The following is a 472-amino-acid chain: Protein DML1 (472 aa).

The span at 441-463 (GDEREEMKQELGDMASKYEHGWE) shows a compositional bias: basic and acidic residues. The segment at 441–472 (GDEREEMKQELGDMASKYEHGWEEESDDDDDY) is disordered.

It belongs to the misato family.

The protein localises to the mitochondrion. Involved in the partitioning of the mitochondrial organelle and mitochondrial DNA (mtDNA) inheritance. This chain is Protein DML1 (DML1), found in Yarrowia lipolytica (strain CLIB 122 / E 150) (Yeast).